The primary structure comprises 65 residues: DNA-directed RNA polymerase subunit Rpo10 (65 aa).

Cys7, Cys10, Cys44, and Cys45 together coordinate Zn(2+).

Belongs to the archaeal Rpo10/eukaryotic RPB10 RNA polymerase subunit family. As to quaternary structure, part of the RNA polymerase complex. The cofactor is Zn(2+).

It is found in the cytoplasm. It carries out the reaction RNA(n) + a ribonucleoside 5'-triphosphate = RNA(n+1) + diphosphate. Its function is as follows. DNA-dependent RNA polymerase (RNAP) catalyzes the transcription of DNA into RNA using the four ribonucleoside triphosphates as substrates. This chain is DNA-directed RNA polymerase subunit Rpo10, found in Thermococcus onnurineus (strain NA1).